The chain runs to 145 residues: Anaerobic nitrite reductase NSHB5 (145 aa).

The region spanning 2 to 142 is the Globin domain; that stretch reads GFSETQEELV…LAAAIKEEMK (141 aa). The Homodimerization signature appears at 35-39; it reads EIAPA. Heme b is bound by residues Ser-45, His-59, Lys-61, Arg-84, Thr-88, and His-89. A Homodimerization motif is present at residues 96–108; sequence DAYFEVVKTALLD.

The protein belongs to the plant globin family. In terms of assembly, homodimer. It depends on heme b as a cofactor. In terms of tissue distribution, expressed in embryonic (embryos, coleoptiles and seminal roots) and vegetative (leaves and roots) organs.

The protein resides in the cytoplasm. Its subcellular location is the nucleus. The catalysed reaction is Fe(III)-heme b-[protein] + nitric oxide + H2O = Fe(II)-heme b-[protein] + nitrite + 2 H(+). Its function is as follows. Phytoglobin that reduces nitrite to nitric oxide under anoxic conditions (e.g. during flooding or in waterlogged soil). May not function as an oxygen storage or transport protein. Has an unusually high affinity for O(2) through an hexacoordinate heme iron because of a very low dissociation constant. This chain is Anaerobic nitrite reductase NSHB5, found in Oryza sativa subsp. japonica (Rice).